The following is a 301-amino-acid chain: Glycine--tRNA ligase alpha subunit (301 aa).

The protein belongs to the class-II aminoacyl-tRNA synthetase family. In terms of assembly, tetramer of two alpha and two beta subunits.

The protein resides in the cytoplasm. The enzyme catalyses tRNA(Gly) + glycine + ATP = glycyl-tRNA(Gly) + AMP + diphosphate. The protein is Glycine--tRNA ligase alpha subunit of Glaesserella parasuis serovar 5 (strain SH0165) (Haemophilus parasuis).